The sequence spans 411 residues: Adenylosuccinate synthetase (411 aa).

Residues 11–17 (GDEGKGK) and 39–41 (GHT) each bind GTP. Aspartate 12 acts as the Proton acceptor in catalysis. Mg(2+)-binding residues include aspartate 12 and glycine 39. IMP-binding positions include 12-15 (DEGK), 37-40 (NAGH), threonine 121, arginine 135, glutamine 215, threonine 230, and arginine 294. The active-site Proton donor is the histidine 40. 290-296 (TTTKRPR) contacts substrate. GTP contacts are provided by residues arginine 296, 322–324 (KLD), and 400–402 (STS).

This sequence belongs to the adenylosuccinate synthetase family. As to quaternary structure, homodimer. The cofactor is Mg(2+).

It localises to the cytoplasm. The catalysed reaction is IMP + L-aspartate + GTP = N(6)-(1,2-dicarboxyethyl)-AMP + GDP + phosphate + 2 H(+). Its pathway is purine metabolism; AMP biosynthesis via de novo pathway; AMP from IMP: step 1/2. Its function is as follows. Plays an important role in the de novo pathway of purine nucleotide biosynthesis. Catalyzes the first committed step in the biosynthesis of AMP from IMP. In Helicobacter pylori (strain HPAG1), this protein is Adenylosuccinate synthetase.